A 72-amino-acid polypeptide reads, in one-letter code: Translation initiation factor IF-1 (72 aa).

In terms of domain architecture, S1-like spans 1–72; that stretch reads MAKEDSIEMQ…SKGRIVFRAR (72 aa).

This sequence belongs to the IF-1 family. In terms of assembly, component of the 30S ribosomal translation pre-initiation complex which assembles on the 30S ribosome in the order IF-2 and IF-3, IF-1 and N-formylmethionyl-tRNA(fMet); mRNA recruitment can occur at any time during PIC assembly.

It is found in the cytoplasm. One of the essential components for the initiation of protein synthesis. Stabilizes the binding of IF-2 and IF-3 on the 30S subunit to which N-formylmethionyl-tRNA(fMet) subsequently binds. Helps modulate mRNA selection, yielding the 30S pre-initiation complex (PIC). Upon addition of the 50S ribosomal subunit IF-1, IF-2 and IF-3 are released leaving the mature 70S translation initiation complex. The protein is Translation initiation factor IF-1 of Psychromonas ingrahamii (strain DSM 17664 / CCUG 51855 / 37).